A 455-amino-acid chain; its full sequence is UDP-N-acetylmuramoyl-tripeptide--D-alanyl-D-alanine ligase (455 aa).

107–113 contributes to the ATP binding site; it reads GSCGKTS.

This sequence belongs to the MurCDEF family. MurF subfamily.

It is found in the cytoplasm. The catalysed reaction is D-alanyl-D-alanine + UDP-N-acetyl-alpha-D-muramoyl-L-alanyl-gamma-D-glutamyl-meso-2,6-diaminopimelate + ATP = UDP-N-acetyl-alpha-D-muramoyl-L-alanyl-gamma-D-glutamyl-meso-2,6-diaminopimeloyl-D-alanyl-D-alanine + ADP + phosphate + H(+). The protein operates within cell wall biogenesis; peptidoglycan biosynthesis. Its function is as follows. Involved in cell wall formation. Catalyzes the final step in the synthesis of UDP-N-acetylmuramoyl-pentapeptide, the precursor of murein. The chain is UDP-N-acetylmuramoyl-tripeptide--D-alanyl-D-alanine ligase from Buchnera aphidicola subsp. Acyrthosiphon pisum (strain APS) (Acyrthosiphon pisum symbiotic bacterium).